A 119-amino-acid chain; its full sequence is Protein yippee-like 1 (119 aa).

The region spanning 19-116 is the Yippee domain; it reads RTYSCIHCRA…IELAHMIKDN (98 aa). Zn(2+) is bound by residues cysteine 23, cysteine 26, cysteine 79, and cysteine 82. Positions 99-104 match the Nuclear localization signal motif; it reads KYKEGK.

It belongs to the yippee family.

The protein resides in the nucleus. In terms of biological role, may play a role in epithelioid conversion of fibroblasts. The chain is Protein yippee-like 1 (YPEL1) from Chlorocebus aethiops (Green monkey).